Consider the following 2251-residue polypeptide: MTSSLAAQLANVRSLNAERLTSSASLVKHTSYLFPPKTAAQQDLFTVHALGASGWTELSAENASLQRWSQSSLLFGDESRSMDRLMLPKEENDTIDKAVDEFLHLAAPFLLSKGASKCLEWLVRRFRVHEFSVEHVLAAFLPYHDTQQFARMLSICKLDGKPHLQFLLSVKKTASPLPAGVLHTAILAPATTTASLDLLRWISGLLANDVSYQLQVSPHRALVNFWTSTLVQICAARSRPDDNQQLAGLSKSTSNSKKSTKTRAADAQAILTILLPSAVRVAGTASLGQDAQMGGFMLLCTISQSFPLSKEAIQGVLTSLAKLLSTSHVVPAVNRALIACAFALCASPIATSDPLTTQSTSADRLIPDSLTAVLVSSTDASNCIGALAKSYDARAFLAHFIAALTARLSHAPSADLLSAILRGPAVQDNLCIQASELLLRLRLGASVGSSQAQDTAFEAHFVNDAVNEAHRNRLRVLQTVRNRKPHVFDTALHNCTRKHQSEAVIAAIWQTVQAVLAIESGIPLQDASQGKHDEQGRSDILWLSIHSADASQRCLALKQLFKDIKEGRALPQDTMVREALHARIQDSSIDVLQILYSQPAAVLNAFDARTLLTMIAEALDEGRIAVDRFTQHLSFLLNPYLKEHADANDQVARRAVWPHLLHSPSRLANASSAIKLLSQSSNTNGVLSLIASFAAKYEDPTHVNDAIARAVAAHLVSVSAEDRKDWVDFLTSTARPSQTTATASRDLALLSLIHLSDKIAGDDLVSLSETILRNVVLPSLTVLGAPTAEHLQQLSSLTLNDALTSLQHVKQLETLFKHAATEQSAILLVNHLLVQLVRRAEVPAFDTYLTSQVSPELQRAKTILTSLYSVINTAPLPTSLSKLLLRILLFKLGDSSLPFLASIWTNTSGSYTAAVRLAALRHADAYLQAQVQAISQQEARDFQVVVPLLLTALADAEAAIRLAAIACLAHILAICKYAGDLAKASKKKAKELDIFGYESFHGAATSDPMQYIDLVSLAPYLEQIIESKSAFRNDAALLPRLHGELLQIGRQDGRKEVGHKHAMVCFIVSHILCIDSLPSRLVLLQSLSRVSDAAKLEMLLPLIREVVEGNVATATNGLRNVEDRELYLELLFASYDRGCRDVVEQAASGAWPLYLKALEGRDGKRQVQKAAVRALDKAGLFATLSPIMRKESYLHLASVVADPSVPASPEVASALRELKVDSAILIAVLSELREAITSKALSGPESKRARTSLSSDETMKRTCAILAAVLESAVGSRLMCTPALLYELFEVLRVAVDLHSGLLATNGEHMMQLAMSCIEKLVGSLPKSAATIPAEIAQALRADTIVSVIKSSNNPQTFQHALLLLSKIASIAPETVLHNVMPIFTFVGSTVLQRDDAFSFSVVEKVLQSIVPALVNSFRASDAAKKSKFALLCEARAFVRIFTDAAAHVPRHRRQTFFRLLVDILGADDFAAAVAMLLVDRSAHKIVKQSRSDAEQTLQLPLAVVSPHSAMVQVRVLHQVWEEVLRIWANRDETESLSELVFLDRAGRLDKEHVDHESEPLRQIQALIMLIRQVLVSKAFADQMGKVASNQIGEELETFIRLALETVASVRSSQPTIAGLALEVLDAAMPFAPVDNVLAVVSGLVEGQDVAHRTSGFSLFASRVGAMSPTSTDRAAVAAYTPTIVKEAIEVIATSLATPPAGADAESLRQAALDALKTVSSSAQTAEHATLASALPTLIKLGKTSAESERVQRAVPWAARISVFSITRRLATKLGPRLIPHIAALVPFCLSVISRSASATVGSADAVQDESENEKGRAAAAGVNSNKAVLRTGALDTLTGLFGSVSTFMSSYVAQIIRMSISPELKKAMSSVSGSSTASERSLNLLVSTLIRKTVANQLFEATFKVWDQELAVAENDDAVERLVGISEFLGRALRQSDREAISATYKLVYRFLLRALDLGRINVAGNGKLSRASIARIETSLVSLPFMRMVLKLNEASFRPLFMRMFDWAVLDLVDGDEVDVHSEETDAIVARQVVLFKTFNALSETLRSLVSSYYAVLLDQVIELLSTWSKLAARATVAHQSMQRELWNEVMRSIQLSAKHDEGIFWNPSRVAKIIGPILDQMNLLNASWNDKKRFIEAEEFVGAVAPVVVGLLNNVNDQATLKLFNSSLLQRASATRATNSSLIRSTATQLLTHMWAAQNDQLLALVPETIAQLSELLEDDHQPIVAYANQFRSHIEAALGESLESYLT.

One copy of the HEAT repeat lies at Val945–Lys983. The next 2 helical transmembrane spans lie at Leu962–Ala982 and Leu1460–Asp1480.

Belongs to the HEATR1/UTP10 family. Component of the ribosomal small subunit (SSU) processome.

It is found in the nucleus. It localises to the nucleolus. The protein localises to the membrane. In terms of biological role, involved in nucleolar processing of pre-18S ribosomal RNA. Involved in ribosome biosynthesis. The protein is U3 small nucleolar RNA-associated protein 10 of Mycosarcoma maydis (Corn smut fungus).